Consider the following 308-residue polypeptide: MLTTLLQSDLPGLPLRHCGKVRDVFDIPRKRLPVDTRSGEYLLIVATDRLSAFDVVLPDPIPGKGEILCQISNFWFQKTEHLMPNHLTGINVASVLPDGIDKTLYIQRAVVTKKLKPVGIEAIARGYLIGSGWKDYQRTGKVSGIQLPDGLQEAEKLPDPIFTPSTKAAVGHHDENIDFDTTVKMVGAELAERVRDATLRIYHFAAKYAAECGILLADTKLEFGTDIDGRLYVMDEMLTPDSSRYWPIDEYQVGTSPPSYDKQLVRNYLETLDWDKTAPGPTLPQDIIDRTRAKYTEALQRLAGINID.

It belongs to the SAICAR synthetase family.

It catalyses the reaction 5-amino-1-(5-phospho-D-ribosyl)imidazole-4-carboxylate + L-aspartate + ATP = (2S)-2-[5-amino-1-(5-phospho-beta-D-ribosyl)imidazole-4-carboxamido]succinate + ADP + phosphate + 2 H(+). It functions in the pathway purine metabolism; IMP biosynthesis via de novo pathway; 5-amino-1-(5-phospho-D-ribosyl)imidazole-4-carboxamide from 5-amino-1-(5-phospho-D-ribosyl)imidazole-4-carboxylate: step 1/2. The polypeptide is Phosphoribosylaminoimidazole-succinocarboxamide synthase (Xylella fastidiosa (strain Temecula1 / ATCC 700964)).